A 391-amino-acid polypeptide reads, in one-letter code: 1-deoxy-D-xylulose 5-phosphate reductoisomerase (391 aa).

Positions 11, 12, 13, 14, 37, 39, and 125 each coordinate NADPH. A 1-deoxy-D-xylulose 5-phosphate-binding site is contributed by lysine 126. Glutamate 127 is a binding site for NADPH. Aspartate 151 provides a ligand contact to Mn(2+). 1-deoxy-D-xylulose 5-phosphate contacts are provided by serine 152, glutamate 153, serine 176, and histidine 199. Glutamate 153 is a Mn(2+) binding site. NADPH is bound at residue glycine 205. Residues serine 212, asparagine 217, lysine 218, and glutamate 221 each coordinate 1-deoxy-D-xylulose 5-phosphate. Glutamate 221 provides a ligand contact to Mn(2+).

Belongs to the DXR family. Mg(2+) is required as a cofactor. Requires Mn(2+) as cofactor.

The enzyme catalyses 2-C-methyl-D-erythritol 4-phosphate + NADP(+) = 1-deoxy-D-xylulose 5-phosphate + NADPH + H(+). It participates in isoprenoid biosynthesis; isopentenyl diphosphate biosynthesis via DXP pathway; isopentenyl diphosphate from 1-deoxy-D-xylulose 5-phosphate: step 1/6. Catalyzes the NADPH-dependent rearrangement and reduction of 1-deoxy-D-xylulose-5-phosphate (DXP) to 2-C-methyl-D-erythritol 4-phosphate (MEP). The protein is 1-deoxy-D-xylulose 5-phosphate reductoisomerase of Heliobacterium modesticaldum (strain ATCC 51547 / Ice1).